The following is a 223-amino-acid chain: MVKFAVIVFPGTNCDFETVEAIKRAGGEAERVWYKQSVKDYDGVVIPGGFSYADYLRAGAIAARQKVMEEIRELAEEGRPILGICNGFQILTEANLLPGALRPNKIPRFLCKWVHLKVVDVETPFTYLYEEGEVVRMPIAHAEGNYYIDNPSKVRIVFQYSDEKGSITEEANPNGSVLNIAGVTNKQGNVLGMMPHPERASDRFLGSEDGLKVFKSIVEWMKK.

The Glutamine amidotransferase type-1 domain maps to 4 to 223; sequence FAVIVFPGTN…FKSIVEWMKK (220 aa). C85 (nucleophile) is an active-site residue. Residues H196 and E198 contribute to the active site.

Part of the FGAM synthase complex composed of 1 PurL, 1 PurQ and 2 PurS subunits.

It is found in the cytoplasm. The catalysed reaction is N(2)-formyl-N(1)-(5-phospho-beta-D-ribosyl)glycinamide + L-glutamine + ATP + H2O = 2-formamido-N(1)-(5-O-phospho-beta-D-ribosyl)acetamidine + L-glutamate + ADP + phosphate + H(+). It catalyses the reaction L-glutamine + H2O = L-glutamate + NH4(+). Its pathway is purine metabolism; IMP biosynthesis via de novo pathway; 5-amino-1-(5-phospho-D-ribosyl)imidazole from N(2)-formyl-N(1)-(5-phospho-D-ribosyl)glycinamide: step 1/2. Its function is as follows. Part of the phosphoribosylformylglycinamidine synthase complex involved in the purines biosynthetic pathway. Catalyzes the ATP-dependent conversion of formylglycinamide ribonucleotide (FGAR) and glutamine to yield formylglycinamidine ribonucleotide (FGAM) and glutamate. The FGAM synthase complex is composed of three subunits. PurQ produces an ammonia molecule by converting glutamine to glutamate. PurL transfers the ammonia molecule to FGAR to form FGAM in an ATP-dependent manner. PurS interacts with PurQ and PurL and is thought to assist in the transfer of the ammonia molecule from PurQ to PurL. This chain is Phosphoribosylformylglycinamidine synthase subunit PurQ, found in Pyrococcus horikoshii (strain ATCC 700860 / DSM 12428 / JCM 9974 / NBRC 100139 / OT-3).